We begin with the raw amino-acid sequence, 359 residues long: Probable cinnamyl alcohol dehydrogenase 8A (359 aa).

A Zn(2+)-binding site is contributed by Cys45. Thr47 lines the NADP(+) pocket. 7 residues coordinate Zn(2+): His67, Glu68, Cys98, Cys101, Cys104, Cys112, and Cys161. NADP(+)-binding positions include Thr165, 186 to 191 (GLGGLG), 209 to 214 (SSSPAK), Thr249, Gly273, and 296 to 298 (SGG).

This sequence belongs to the zinc-containing alcohol dehydrogenase family. Homodimer. The cofactor is Zn(2+).

It catalyses the reaction (E)-cinnamyl alcohol + NADP(+) = (E)-cinnamaldehyde + NADPH + H(+). The enzyme catalyses (E)-coniferol + NADP(+) = (E)-coniferaldehyde + NADPH + H(+). It carries out the reaction (E)-sinapyl alcohol + NADP(+) = (E)-sinapaldehyde + NADPH + H(+). The catalysed reaction is (E)-4-coumaroyl alcohol + NADP(+) = (E)-4-coumaraldehyde + NADPH + H(+). It catalyses the reaction (E)-caffeyl alcohol + NADP(+) = (E)-caffeyl aldehyde + NADPH + H(+). Its pathway is aromatic compound metabolism; phenylpropanoid biosynthesis. Functionally, involved in lignin biosynthesis. Catalyzes the final step specific for the production of lignin monomers. Catalyzes the NADPH-dependent reduction of coniferaldehyde, 5-hydroxyconiferaldehyde, sinapaldehyde, 4-coumaraldehyde and caffeyl aldehyde to their respective alcohols. The chain is Probable cinnamyl alcohol dehydrogenase 8A from Oryza sativa subsp. japonica (Rice).